Consider the following 355-residue polypeptide: Protein-glutamate methylesterase/protein-glutamine glutaminase 3 (355 aa).

In terms of domain architecture, Response regulatory spans 5–122 (KVLIVDDSAV…KQFLEESRVR (118 aa)). Asp56 bears the 4-aspartylphosphate mark. Positions 165–355 (IQTTEKVVVV…IAREVLRLCG (191 aa)) constitute a CheB-type methylesterase domain. Active-site residues include Ser177, His203, and Asp299.

It belongs to the CheB family. Phosphorylated by CheA. Phosphorylation of the N-terminal regulatory domain activates the methylesterase activity.

It is found in the cytoplasm. The catalysed reaction is [protein]-L-glutamate 5-O-methyl ester + H2O = L-glutamyl-[protein] + methanol + H(+). It carries out the reaction L-glutaminyl-[protein] + H2O = L-glutamyl-[protein] + NH4(+). Functionally, involved in chemotaxis. Part of a chemotaxis signal transduction system that modulates chemotaxis in response to various stimuli. Catalyzes the demethylation of specific methylglutamate residues introduced into the chemoreceptors (methyl-accepting chemotaxis proteins or MCP) by CheR. Also mediates the irreversible deamidation of specific glutamine residues to glutamic acid. The polypeptide is Protein-glutamate methylesterase/protein-glutamine glutaminase 3 (Geobacter metallireducens (strain ATCC 53774 / DSM 7210 / GS-15)).